A 387-amino-acid chain; its full sequence is tRNA pseudouridine synthase B (387 aa).

Asp43 serves as the catalytic Nucleophile.

The protein belongs to the pseudouridine synthase TruB family. Type 1 subfamily.

It carries out the reaction uridine(55) in tRNA = pseudouridine(55) in tRNA. Responsible for synthesis of pseudouridine from uracil-55 in the psi GC loop of transfer RNAs. In Bifidobacterium longum (strain NCC 2705), this protein is tRNA pseudouridine synthase B.